We begin with the raw amino-acid sequence, 2167 residues long: MRLLLFSAALLLCSVPTWAFSLSSFFGSDVAQKPYLHPNSPPERDPASSRMKRQAYQVYVDGDVSVTVDKSGQKETGNWGPWVPENECSRSCGGGVQLEKRQCSGDCTGASVRYISCNLNACESGTDFRAEQCSKFNDEALDGNYHKWTPYKGKNKCELVCKPESGNFYYKWADKVVDGTKCDSKSNDICVDGECLPVGCDGKLGSSLKFDKCGKCDGDGSTCKTIEGRFDERNLSPGYHDIIKLPEGATNIKIQEARKSTNNLALKNGSDHFYLNGNGLIQVEKEVEVGGTIFVYDDAEPETLSAQGPLSEELTVALLFRKGSRDTAIKYEFSIPLEEEVDYMYKFDNWTPCSVSCGKGVQTRNLYCIDGKNKGRVEDDLCEENNATKPEFEKSCETVDCEAEWFTGDWESCSSTCGDQGQQYRVVYCHQVFANGRRVTVEDGNCTVERPPVKQTCNRFACPEWQAGPWSACSEKCGDAFQYRSVTCRSEKEGEEGKLLAADACPADEQEKFDTERTCNLGPCEGLTFVTGEWNLCTRCNDTEETREVTCKDSQGRAYPLEKCLVDNSTEIPTDTRSCATQPPCEYEWTVSEWSKCTTECGHGHKTRRVICAIHQNGGLEVVDEGHCQAEKPEGKTNCTNEEKCTGTWYTSSWSECTAECGGGSQDRVAVCLNYDKKPVPEWCDEAVKPSEKQDCNVDDCPTCVDSEFGCCPDNSTFATGEFNFGCSNCSETEFGCCADNVTVATGPNSKGCEEFVESPLNLEADVANADAEASGDAPELCSVTNENGEAVDVECATIAPITALLGDGELIGNDTDASNETIHCSKTEFGCCPDWYTAASGKGNEGCPSFTLGGCNETQFGCCHDDVTLARGANLEGCGEPSCAASLYGCCKDRKTIAFGPHYSGCERSSFPCELSDFGCCPDGETAALGKNGTGCGENCLTTKFGCCPDGKTTAKGSHNEGCGCEFAQYGCCPDGKSVAKGAGFYGCPESCAQSQFGCCPDGKTRARGENKEGCPCQYTRYGCCPDGETTALGPRNDGCDNCRYAKHGCCPDGETKALGPDGAGCPPTTTPPFLMGGTVAPHKIAACNQTQESGTVCGAGYKLAWHYDTTEGRCNQFWYGGCGGNDNNFASQDMCETICVEPPGKGRCYLPRVDGPLRCDQLQPRYYYDHSKKHCVAFWWRGCLGNANNFNSFEECSMFCKDVGPYDAPTTAAPPPPPQQNAQQYLPTPEVQQIEIQSAEQPQPQQPQQQQQQQQQQPQQPRQSMEDICRSRQDAGPCETYSDQWFYNAFSQECETFTYGGCGGNLNRFRSKDECEQRCFFVHGAQPSAARQEQAQPAAQPAQPAQPSNIVSPPQQSASPVVVPSNSKQRDACHLNVDQGRCKGAFDSWYYEVATGSCVTFKYTGCGGNANRFASKDQCESLCVKPASEAASAGIDGAAGINSVCDEAKDTGPCTNFVTKWYYNKADGTCNRFHYGGCQGTNNRFDNEQQCKAACQNHKDACQLPKVQGPCSGKHSYYYYNTASHQCETFTYGGCLGNTNRFATIEECQARCPKDDQTTTTSQPEELPSLPLVQEDPQPRPAFSLKQSFAHSRRRDAPFARSVSARHHTPDSEEERVDCYAVPDPGSCGDYRLVWHYSATSNSCRQFYYGGCAGNTNRFETRDKCETSCVAKIEERVESVSEASKSLEEVRLTDPRMDSHFGYHDPEVDQIEEEAEYVIVDTGALPELCMLPEQRGSCYDNILRWRFDSEKSQCVTFMYSGCNPNANHFTSQETCERACGKWRNVAVCELPAEHGDCQLAIPRWYHDPKTSQCQMMMWTGCGGNGNAFSSKADCESLCRVETLWSNNTDFCTLERSAGPCTDSISMWYFDSTHLDCKPFTYGGCRGNQNRFVSKEQCQQSCRPGDTKSEDICTLRPEPGPCRLGLEKYFYDPVIQSCHMFHYGGCEGNANRFDSELDCFRRCSSVKVEASESERVGQLTSASTPVIYIVNKTAIFVGNTFRIRCNSYGVLPITWYKNGGLLQFGSRITEENDDTLEIVDALTADAGVYTCIAGQDSTMSEGVEVVIKRLPGHRTTSRPMLTPSKNFSLGTPPTPSPSTVSTTPFRIYTPGSAPSDARVSRPTSNSCMDVGNASTCDLIVKNGLCGKKRYGTFCCHTCTRVHNFKF.

The first 19 residues, 1-19 (MRLLLFSAALLLCSVPTWA), serve as a signal peptide directing secretion. One can recognise a TSP type-1 1 domain in the interval 76 to 123 (TGNWGPWVPENECSRSCGGGVQLEKRQCSGDCTGASVRYISCNLNACE). 3 disulfide bridges follow: Cys-88-Cys-117, Cys-92-Cys-122, and Cys-103-Cys-107. The N-linked (GlcNAc...) asparagine glycan is linked to Asn-268. 3 consecutive TSP type-1 domains span residues 341-402 (VDYM…VDCE), 404-459 (EWFT…TCNR), and 461-525 (ACPE…GPCE). 3 disulfide bridges follow: Cys-353-Cys-396, Cys-357-Cys-401, and Cys-368-Cys-382. Residues Asn-386 and Asn-445 are each glycosylated (N-linked (GlcNAc...) asparagine). 3 N-linked (GlcNAc...) asparagine glycosylation sites follow: Asn-541, Asn-568, and Asn-638. TSP type-1 domains follow at residues 585–643 (CEYE…TNEE) and 645–702 (CTGT…DDCP). N-linked (GlcNAc...) asparagine glycosylation is found at Asn-715, Asn-729, Asn-741, Asn-814, Asn-820, Asn-857, Asn-933, and Asn-1090. 6 cysteine pairs are disulfide-bonded: Cys-1089-Cys-1141, Cys-1099-Cys-1124, Cys-1116-Cys-1137, Cys-1150-Cys-1202, Cys-1161-Cys-1185, and Cys-1177-Cys-1198. BPTI/Kunitz inhibitor domains are found at residues 1089-1141 (CNQT…ETIC) and 1150-1202 (CYLP…SMFC). A disordered region spans residues 1239-1273 (QSAEQPQPQQPQQQQQQQQQQPQQPRQSMEDICRS). Positions 1243 to 1263 (QPQPQQPQQQQQQQQQQPQQP) are enriched in low complexity. 3 disulfide bridges follow: Cys-1271–Cys-1321, Cys-1280–Cys-1304, and Cys-1296–Cys-1317. A BPTI/Kunitz inhibitor 3 domain is found at 1271–1321 (CRSRQDAGPCETYSDQWFYNAFSQECETFTYGGCGGNLNRFRSKDECEQRC). Residues 1332-1365 (ARQEQAQPAAQPAQPAQPSNIVSPPQQSASPVVV) are disordered. Cystine bridges form between Cys-1375-Cys-1425, Cys-1384-Cys-1408, Cys-1400-Cys-1421, Cys-1447-Cys-1497, Cys-1456-Cys-1480, Cys-1472-Cys-1493, Cys-1504-Cys-1554, Cys-1513-Cys-1537, and Cys-1529-Cys-1550. BPTI/Kunitz inhibitor domains are found at residues 1375–1425 (CHLN…ESLC), 1447–1497 (CDEA…KAAC), and 1504–1554 (CQLP…QARC). Residues 1556 to 1615 (KDDQTTTTSQPEELPSLPLVQEDPQPRPAFSLKQSFAHSRRRDAPFARSVSARHHTPDSE) are disordered. Disulfide bonds link Cys-1621–Cys-1671, Cys-1630–Cys-1654, Cys-1646–Cys-1667, Cys-1731–Cys-1781, Cys-1740–Cys-1764, Cys-1756–Cys-1777, Cys-1790–Cys-1840, Cys-1799–Cys-1823, and Cys-1815–Cys-1836. 3 consecutive BPTI/Kunitz inhibitor domains span residues 1621 to 1671 (CYAV…ETSC), 1731 to 1781 (CMLP…ERAC), and 1790 to 1840 (CELP…ESLC). N-linked (GlcNAc...) asparagine glycosylation is present at Asn-1848. Intrachain disulfides connect Cys-1853/Cys-1903, Cys-1862/Cys-1886, Cys-1878/Cys-1899, Cys-1914/Cys-1964, Cys-1923/Cys-1947, and Cys-1939/Cys-1960. 2 BPTI/Kunitz inhibitor domains span residues 1853 to 1903 (CTLE…QQSC) and 1914 to 1964 (CTLR…FRRC). Asn-1992, Asn-2087, and Asn-2133 each carry an N-linked (GlcNAc...) asparagine glycan. Residues 2075–2106 (RTTSRPMLTPSKNFSLGTPPTPSPSTVSTTPF) are disordered. The span at 2078–2090 (SRPMLTPSKNFSL) shows a compositional bias: polar residues. The region spanning 2124–2163 (TSNSCMDVGNASTCDLIVKNGLCGKKRYGTFCCHTCTRVH) is the PLAC domain.

It belongs to the papilin family. In terms of tissue distribution, localizes to the basement membranes of the gonad primordium, pharynx and intestine (at protein level). Expressed in head and CAN neurons, coelomocytes, body-wall muscles and anal depressor and sphincter and stomatointestinal muscles. Expressed Isoform a: is expressed in body wall muscles and distal cell tips. Isoform b: expressed in embryonic muscles.

It localises to the secreted. The protein resides in the extracellular space. Its subcellular location is the extracellular matrix. It is found in the basement membrane. Involved in pharynx morphogenesis probably by remodeling the basement membrane. Functionally, plays a role in embryogenesis, the second phase of distal cell tip migration and is required for distribution of the metalloproteinase, mig-17, during organogenesis. In terms of biological role, plays a role in post embryonic distal cell tip migration. Essential extracellular matrix (ECM) protein required for hypodermal enclosure in the embryo. The protein is Papilin (mig-6) of Caenorhabditis elegans.